Here is a 401-residue protein sequence, read N- to C-terminus: Dual-specificity RNA methyltransferase RlmN (401 aa).

Glu-114 acts as the Proton acceptor in catalysis. The 246-residue stretch at 120 to 365 folds into the Radical SAM core domain; the sequence is DKGRGTLCVS…TIVRRTRGDD (246 aa). Cys-127 and Cys-370 form a disulfide bridge. Cys-134, Cys-138, and Cys-141 together coordinate [4Fe-4S] cluster. S-adenosyl-L-methionine-binding positions include 187–188, Ser-219, 241–243, and Asn-327; these read GE and SLH. Cys-370 serves as the catalytic S-methylcysteine intermediate.

This sequence belongs to the radical SAM superfamily. RlmN family. It depends on [4Fe-4S] cluster as a cofactor.

Its subcellular location is the cytoplasm. It catalyses the reaction adenosine(2503) in 23S rRNA + 2 reduced [2Fe-2S]-[ferredoxin] + 2 S-adenosyl-L-methionine = 2-methyladenosine(2503) in 23S rRNA + 5'-deoxyadenosine + L-methionine + 2 oxidized [2Fe-2S]-[ferredoxin] + S-adenosyl-L-homocysteine. The catalysed reaction is adenosine(37) in tRNA + 2 reduced [2Fe-2S]-[ferredoxin] + 2 S-adenosyl-L-methionine = 2-methyladenosine(37) in tRNA + 5'-deoxyadenosine + L-methionine + 2 oxidized [2Fe-2S]-[ferredoxin] + S-adenosyl-L-homocysteine. Its function is as follows. Specifically methylates position 2 of adenine 2503 in 23S rRNA and position 2 of adenine 37 in tRNAs. m2A2503 modification seems to play a crucial role in the proofreading step occurring at the peptidyl transferase center and thus would serve to optimize ribosomal fidelity. This is Dual-specificity RNA methyltransferase RlmN from Xanthomonas oryzae pv. oryzae (strain MAFF 311018).